The primary structure comprises 328 residues: tRNA uridine(34) hydroxylase (328 aa).

Positions 130–224 (LDKDTVVLDT…YGKDPEVQGE (95 aa)) constitute a Rhodanese domain. The active-site Cysteine persulfide intermediate is Cys184.

This sequence belongs to the TrhO family.

It carries out the reaction uridine(34) in tRNA + AH2 + O2 = 5-hydroxyuridine(34) in tRNA + A + H2O. Its function is as follows. Catalyzes oxygen-dependent 5-hydroxyuridine (ho5U) modification at position 34 in tRNAs. The polypeptide is tRNA uridine(34) hydroxylase (Streptococcus pneumoniae (strain Hungary19A-6)).